Here is a 502-residue protein sequence, read N- to C-terminus: NAD(P)H-quinone oxidoreductase chain 4, chloroplastic (502 aa).

A run of 14 helical transmembrane segments spans residues 4-24 (FPWLTILVVLPIFAGSLIFFL), 37-57 (ISICLLEFLLMTYAFCYHFQL), 87-107 (LGSILLTGFITTLATLAAWPV), 113-130 (LFYFLMLAMYSGQIGLFS), 134-154 (LLLFFIMWELELIPVYLLLSM), 167-187 (FILYTAGGSIFFLIGVLGMGL), 213-233 (ILLYFGFLIAYAVKLPIIPLH), 244-264 (HYSTCMLLAGILLKMGAYGLI), 274-294 (AHYLFSPWLVIIGAIQIIYAA), 315-335 (MGFIIIGIGSITNIGLNGAIL), 336-356 (QILSHGFIGATLFFLAGTASD), 388-408 (LALPGMSGFVAELVVFFGLIT), 419-439 (LITFVMAIGMILTPIYLLSML), and 464-484 (LFILICIFLPVIGIGIYPDFV).

The protein belongs to the complex I subunit 4 family.

It is found in the plastid. It localises to the chloroplast thylakoid membrane. The enzyme catalyses a plastoquinone + NADH + (n+1) H(+)(in) = a plastoquinol + NAD(+) + n H(+)(out). It catalyses the reaction a plastoquinone + NADPH + (n+1) H(+)(in) = a plastoquinol + NADP(+) + n H(+)(out). This Lolium perenne (Perennial ryegrass) protein is NAD(P)H-quinone oxidoreductase chain 4, chloroplastic.